Here is a 440-residue protein sequence, read N- to C-terminus: Cytochrome c biogenesis protein Ccs1 (440 aa).

Transmembrane regions (helical) follow at residues Leu19–Ile39, Asn78–Thr98, and Val164–Ala184.

Belongs to the Ccs1/CcsB family. May interact with CcsA.

The protein resides in the plastid. It is found in the chloroplast thylakoid membrane. Required during biogenesis of c-type cytochromes (cytochrome c6 and cytochrome f) at the step of heme attachment. This chain is Cytochrome c biogenesis protein Ccs1, found in Emiliania huxleyi (Coccolithophore).